Reading from the N-terminus, the 2073-residue chain is Histone acetyltransferase KAT6B (2073 aa).

Positions 1–77 constitute an SAMD1-like winged helix (WH) domain; it reads MVKLANPLYT…LASYKDPDNP (77 aa). The disordered stretch occupies residues 72–97; sequence KDPDNPGRFSSVKPGTFPKSAKGSRG. The H15 domain occupies 103–176; the sequence is RNVDWNKLLR…KDGPQYRVNY (74 aa). 2 consecutive PHD-type zinc fingers follow at residues 213–272 and 269–320; these read IPIC…CKTC and CKTC…CRPK. S355 is modified (phosphoserine). Disordered regions lie at residues 360-409, 442-531, 553-583, and 639-663; these read EGSM…RPGA, FTPS…VPSL, TQGQ…TAKS, and VTPQ…PDQD. Positions 361 to 717 are negatively regulates HAT activity; that stretch reads GSMNAFTGRG…ECESGVEDCG (357 aa). The segment covering 379 to 399 has biased composition (polar residues); that stretch reads KVCTTPSSGHAASGKDSSSRL. Positions 447–460 are enriched in basic and acidic residues; the sequence is DGRRSRGEIIDFSK. The span at 470–485 shows a compositional bias: polar residues; the sequence is QKQSCTSHVLATGTTQ. Residues 488-499 show a composition bias toward pro residues; that stretch reads KPPPSSLPPPTP. Low complexity predominate over residues 501-531; the sequence is SGQSPSSQKSSTATSSPSPQSSSSQCSVPSL. S647 is subject to Phosphoserine. A Glycyl lysine isopeptide (Lys-Gly) (interchain with G-Cter in SUMO2) cross-link involves residue K673. One can recognise an MYST-type HAT domain in the interval 715–989; it reads DCGRYPSVIE…LDPDSLRWTP (275 aa). The catalytic stretch occupies residues 718-1008; the sequence is RYPSVIEFGK…EEEREAEKEA (291 aa). The C2HC MYST-type zinc-finger motif lies at 748–773; sequence LYLCEFCLKYMKSKNILLRHSKKCGW. An interaction with BRPF1 region spans residues 752–1008; sequence EFCLKYMKSK…EEEREAEKEA (257 aa). K815 carries the N6-acetyllysine; by autocatalysis modification. Residues 856 to 860 and 865 to 871 each bind acetyl-CoA; these read SCIMI and QRQGFGR. The Proton donor/acceptor role is filled by E891. S895 is a binding site for acetyl-CoA. 3 disordered regions span residues 1022-1452, 1484-1538, and 1580-1619; these read EQEI…FKEV, SCNS…MEID, and QSPQ…SPSV. Over residues 1025–1043 the composition is skewed to polar residues; that stretch reads ILSTRANSRQSPAKVQSKN. 3 positions are modified to N6-acetyllysine: K1038, K1042, and K1044. A Phosphoserine modification is found at S1048. Residues 1069 to 1105 show a composition bias toward acidic residues; the sequence is SEEEEEEEDEEEEEEEEEEEEDEEEEEEEEEEEEEEN. The segment covering 1106–1117 has biased composition (polar residues); that stretch reads IQSSPPRLTKPQ. Over residues 1121–1140 the composition is skewed to basic residues; sequence IKRKRPFVLKKKRGRKRRRI. Positions 1142–1155 are enriched in low complexity; it reads SSVTTETISETTEV. A compositionally biased stretch (basic residues) spans 1187 to 1200; sequence PVLRKAFQHQPGKK. Composition is skewed to basic and acidic residues over residues 1229–1243, 1306–1315, and 1341–1350; these read SNLK…EPLK, RIEEEVKETG, and EKPEDDLIKP. Positions 1351–1374 are enriched in acidic residues; it reads EEEEEEEEEEEEEEEEEEGEEEEG. Composition is skewed to basic and acidic residues over residues 1378–1390 and 1396–1407; these read VEKD…SQEK and STEKEDSARLDD. Residues 1408 to 1417 are compositionally biased toward acidic residues; sequence HEEEEEEDEE. Over residues 1433-1452 the composition is skewed to basic and acidic residues; it reads HMESAEVEKEELPRESFKEV. Residues 1498–1507 are compositionally biased toward acidic residues; the sequence is AVPESDEEPP. Positions 1513 to 1529 are enriched in basic and acidic residues; the sequence is QKQDQKNSKEVDTEFKE. An interaction with RUNX1 and RUNX2 region spans residues 1560-2073; it reads QDCAETQEAC…QSLNGSYMRR (514 aa). Residues 1580–1591 are compositionally biased toward polar residues; it reads QSPQIATTLDDC. Positions 1594-1611 are enriched in low complexity; that stretch reads SDHSSPVSSVHSHPGQSV.

This sequence belongs to the MYST (SAS/MOZ) family. As to quaternary structure, component of the MOZ/MORF complex composed at least of ING5, KAT6A, KAT6B, MEAF6 and one of BRPF1, BRD1/BRPF2 and BRPF3. Interacts with RUNX1 and RUNX2. Post-translationally, autoacetylated. Autoacetylation at Lys-815 is required for proper function. In terms of tissue distribution, ubiquitously expressed, with high levels in heart, pancreas, testis and ovary.

The protein resides in the nucleus. The catalysed reaction is L-lysyl-[protein] + acetyl-CoA = N(6)-acetyl-L-lysyl-[protein] + CoA + H(+). Functionally, histone acetyltransferase which may be involved in both positive and negative regulation of transcription. Required for RUNX2-dependent transcriptional activation. May be involved in cerebral cortex development. Component of the MOZ/MORF complex which has a histone H3 acetyltransferase activity. The protein is Histone acetyltransferase KAT6B (KAT6B) of Homo sapiens (Human).